Consider the following 317-residue polypeptide: 3-oxoacyl-[acyl-carrier-protein] reductase 5, chloroplastic (317 aa).

The transit peptide at 1-57 (TTVAATKLTSLKATAGKLGYREICQVRQWAPLKSAMPHFGMLRCATSTVVKAQAQAQ) directs the protein to the chloroplast. Position 79–103 (79–103 (VTGASRGIGKAIALSLGKAGCKVLV)) interacts with NADP(+). Residue Ser-211 participates in substrate binding. The active-site Proton acceptor is Tyr-224.

This sequence belongs to the short-chain dehydrogenases/reductases (SDR) family. Homotetramer.

It is found in the plastid. The protein resides in the chloroplast. The catalysed reaction is a (3R)-hydroxyacyl-[ACP] + NADP(+) = a 3-oxoacyl-[ACP] + NADPH + H(+). It participates in lipid metabolism; fatty acid biosynthesis. The polypeptide is 3-oxoacyl-[acyl-carrier-protein] reductase 5, chloroplastic (bkr1) (Brassica napus (Rape)).